Consider the following 399-residue polypeptide: Phosphoglycerate kinase (399 aa).

Substrate-binding positions include 22 to 24, arginine 38, 61 to 64, arginine 120, and arginine 153; these read DFN and HLGR. ATP is bound by residues lysine 204, glutamate 326, and 352–355; that span reads GGDT.

It belongs to the phosphoglycerate kinase family. As to quaternary structure, monomer.

Its subcellular location is the cytoplasm. The enzyme catalyses (2R)-3-phosphoglycerate + ATP = (2R)-3-phospho-glyceroyl phosphate + ADP. The protein operates within carbohydrate degradation; glycolysis; pyruvate from D-glyceraldehyde 3-phosphate: step 2/5. The polypeptide is Phosphoglycerate kinase (Pelobacter propionicus (strain DSM 2379 / NBRC 103807 / OttBd1)).